A 63-amino-acid chain; its full sequence is Large ribosomal subunit protein bL28 (63 aa).

Belongs to the bacterial ribosomal protein bL28 family.

This is Large ribosomal subunit protein bL28 from Clostridium novyi (strain NT).